The primary structure comprises 176 residues: Inorganic pyrophosphatase (176 aa).

Substrate-binding residues include Lys-30, Arg-44, and Tyr-56. Positions 66, 71, and 103 each coordinate Mg(2+). Tyr-142 serves as a coordination point for substrate.

It belongs to the PPase family. As to quaternary structure, homohexamer. Mg(2+) is required as a cofactor.

The protein resides in the cytoplasm. It catalyses the reaction diphosphate + H2O = 2 phosphate + H(+). Catalyzes the hydrolysis of inorganic pyrophosphate (PPi) forming two phosphate ions. This is Inorganic pyrophosphatase from Vibrio vulnificus (strain CMCP6).